A 231-amino-acid chain; its full sequence is tRNA (guanine-N(1)-)-methyltransferase (231 aa).

Residues Gly-112 and 132–137 (LGDFVL) contribute to the S-adenosyl-L-methionine site.

This sequence belongs to the RNA methyltransferase TrmD family. In terms of assembly, homodimer.

The protein localises to the cytoplasm. The catalysed reaction is guanosine(37) in tRNA + S-adenosyl-L-methionine = N(1)-methylguanosine(37) in tRNA + S-adenosyl-L-homocysteine + H(+). Specifically methylates guanosine-37 in various tRNAs. In Gloeothece citriformis (strain PCC 7424) (Cyanothece sp. (strain PCC 7424)), this protein is tRNA (guanine-N(1)-)-methyltransferase.